The primary structure comprises 192 residues: Epoxyqueuosine reductase QueH (192 aa).

The [4Fe-4S] cluster site is built by cysteine 9, cysteine 10, cysteine 87, and cysteine 90. A disulfide bridge links cysteine 169 with cysteine 171.

This sequence belongs to the QueH family.

The enzyme catalyses epoxyqueuosine(34) in tRNA + AH2 = queuosine(34) in tRNA + A + H2O. Its pathway is tRNA modification; tRNA-queuosine biosynthesis. Catalyzes the conversion of epoxyqueuosine (oQ) to queuosine (Q), which is a hypermodified base found in the wobble positions of tRNA(Asp), tRNA(Asn), tRNA(His) and tRNA(Tyr). The polypeptide is Epoxyqueuosine reductase QueH (Thermotoga maritima (strain ATCC 43589 / DSM 3109 / JCM 10099 / NBRC 100826 / MSB8)).